Reading from the N-terminus, the 359-residue chain is Cyclin puc1 (359 aa).

The protein belongs to the cyclin family.

In terms of biological role, function in exit from the mitotic cycle. Contributes to negative regulation of the timing of sexual development in fission yeast, and functions at the transition between cycling and non-cycling cells. Interacts with protein kinase A. The polypeptide is Cyclin puc1 (puc1) (Schizosaccharomyces pombe (strain 972 / ATCC 24843) (Fission yeast)).